A 520-amino-acid chain; its full sequence is Sodium-dependent dicarboxylate transporter SdcS (520 aa).

14 consecutive transmembrane segments (helical) span residues 30–50, 55–75, 77–97, 104–124, 160–180, 207–227, 242–262, 298–318, 323–343, 362–382, 399–419, 428–448, 452–472, and 491–511; these read AGQLIGLILGPLLFLLTLLFF, LPWKGVYVLAITLWIATWWIT, AIPIAATSLLPIVLLPLGHIL, SEYGNDIIFLFLGGFILAIAM, SMFVSNTAAVMIMIPIGLAII, IGYAGTIGGLGTLIGTPPLII, FAKWMIVGIPTVIVLLGITWL, KVVQTIFVLASLLWITREFLL, VTSSVADGTIAIFISILLFVI, ELPWGVLILFGGGLALAKGIS, GVSPILIVIVITIFVLFLTEV, MILPILATLSVAVGVHPLLLM, AMAANCAYMLPVGTPPNAIIF, and LISAIIIILVVYYVMPIVLGI.

The protein belongs to the SLC13A/DASS transporter (TC 2.A.47) family. NADC subfamily.

It localises to the cell membrane. In terms of biological role, mediates the transport of the dicarboxylates fumarate, malate, and succinate across the cytoplasmic membrane via a Na(+)-electrochemical gradient. This is Sodium-dependent dicarboxylate transporter SdcS (sdcS) from Staphylococcus aureus (strain MSSA476).